The sequence spans 550 residues: Pectinesterase 2.1 (550 aa).

Asparagine 179 carries an N-linked (GlcNAc...) asparagine glycan. Substrate contacts are provided by threonine 312 and glutamine 342. Cysteine 331 and cysteine 358 form a disulfide bridge. Aspartate 365 functions as the Proton donor in the catalytic mechanism. Aspartate 386 acts as the Nucleophile in catalysis. Cysteine 399 and cysteine 433 are oxidised to a cystine. Arginine 454 and tryptophan 456 together coordinate substrate.

The protein in the N-terminal section; belongs to the PMEI family. In the C-terminal section; belongs to the pectinesterase family.

Its subcellular location is the secreted. The protein resides in the cell wall. It carries out the reaction [(1-&gt;4)-alpha-D-galacturonosyl methyl ester](n) + n H2O = [(1-&gt;4)-alpha-D-galacturonosyl](n) + n methanol + n H(+). It functions in the pathway glycan metabolism; pectin degradation; 2-dehydro-3-deoxy-D-gluconate from pectin: step 1/5. Its function is as follows. Pectinesterase may play a role in cell wall metabolism during fruit growth and development prior to ripening and may be required for preparing cell walls for softening by polygalacturonase during fruit ripening. The polypeptide is Pectinesterase 2.1 (PME2.1) (Solanum lycopersicum (Tomato)).